Reading from the N-terminus, the 100-residue chain is MAKKSSIEREKKRSELTQKYSNLRKSLKEMIHQASSLEEKWSIQRQLQRLPRNSAATRVHRRCFVTGRPRAVYRDFGLSRHVIREMAHACLLPGVIKASW.

Belongs to the universal ribosomal protein uS14 family. Part of the 30S ribosomal subunit.

The protein resides in the plastid. It is found in the chloroplast. Binds 16S rRNA, required for the assembly of 30S particles. This chain is Small ribosomal subunit protein uS14c, found in Zygnema circumcarinatum (Green alga).